The primary structure comprises 823 residues: Mitochondrial intermediate peptidase 2 (823 aa).

The N-terminal 33 residues, 1–33 (MRRLQQSLRRRSARRCPFILIPHRLLTTSYASY), are a transit peptide targeting the mitochondrion. Residues 532–553 (IDGDGLPEDWDKPYGPGLEADK) are disordered. Histidine 595 contributes to the Zn(2+) binding site. The active site involves glutamate 596. The Zn(2+) site is built by histidine 599 and histidine 602.

Belongs to the peptidase M3 family. Requires Zn(2+) as cofactor.

Its subcellular location is the mitochondrion matrix. It carries out the reaction Release of an N-terminal octapeptide as second stage of processing of some proteins imported into the mitochondrion.. Functionally, cleaves proteins, imported into the mitochondrion, to their mature size. While most mitochondrial precursor proteins are processed to the mature form in one step by mitochondrial processing peptidase (MPP), the sequential cleavage by MIP of an octapeptide after initial processing by MPP is a required step for a subgroup of nuclear-encoded precursor proteins destined for the matrix or the inner membrane. This Cryptococcus neoformans var. neoformans serotype D (strain B-3501A) (Filobasidiella neoformans) protein is Mitochondrial intermediate peptidase 2 (OCT2).